The chain runs to 460 residues: 3'3'-cGAMP-specific phosphodiesterase 3 (460 aa).

The 162-residue stretch at 28-189 (PPEHCIRCCW…IPLFSRIALL (162 aa)) folds into the HD domain. In terms of domain architecture, HD-GYP spans 260 to 455 (DDAYLECIVT…LPDEYTQLPH (196 aa)). Positions 317 and 318 each coordinate a divalent metal cation. The Proton donor role is filled by lysine 321. Positions 346, 370, 371, and 399 each coordinate a divalent metal cation.

As to quaternary structure, monomer. Mn(2+) is required as a cofactor.

It carries out the reaction 3',3'-cGAMP + H2O = 5'-pApG-3' + H(+). In terms of biological role, phosphodiesterase (PDE) that catalyzes the hydrolysis of 3'3'-cyclic GMP-AMP (3'3'-cGAMP), leading to linear 5'-pApG. Counteracts the function of the 3'3'-cGAMP synthase DncV, and is involved in the modulation of intracellular 3'3'-cGAMP levels. Enhances bacterial chemotaxis and inhibits intestinal colonization in vivo. Thus exerts a crucial role in regulating bacterial infectivity through catalyzing 3'3'-cGAMP degradation. Is specific for 3'3'-cGAMP since it cannot degrade other cGAMP linkage isomers (3'2'-, 2'3'-, and 2'2'-cGAMPs); is also able to hydrolyze c-di-GMP but not c-di-AMP. The protein is 3'3'-cGAMP-specific phosphodiesterase 3 of Vibrio cholerae serotype O1 (strain ATCC 39315 / El Tor Inaba N16961).